The chain runs to 396 residues: Elongation factor Tu (396 aa).

One can recognise a tr-type G domain in the interval 10 to 206 (KPHVNVGTIG…ALDNYIPLPE (197 aa)). Positions 19 to 26 (GHVDHGKT) are G1. Residue 19–26 (GHVDHGKT) coordinates GTP. Threonine 26 is a Mg(2+) binding site. Positions 60 to 64 (GITIN) are G2. The tract at residues 81-84 (DCPG) is G3. GTP is bound by residues 81–85 (DCPGH) and 136–139 (NKCD). Residues 136–139 (NKCD) form a G4 region. The segment at 174-176 (SAK) is G5.

It belongs to the TRAFAC class translation factor GTPase superfamily. Classic translation factor GTPase family. EF-Tu/EF-1A subfamily. In terms of assembly, monomer.

The protein resides in the cytoplasm. The enzyme catalyses GTP + H2O = GDP + phosphate + H(+). Its function is as follows. GTP hydrolase that promotes the GTP-dependent binding of aminoacyl-tRNA to the A-site of ribosomes during protein biosynthesis. This is Elongation factor Tu from Polaromonas naphthalenivorans (strain CJ2).